Reading from the N-terminus, the 360-residue chain is Peptide chain release factor 1 (360 aa).

N5-methylglutamine is present on Gln-236.

This sequence belongs to the prokaryotic/mitochondrial release factor family. In terms of processing, methylated by PrmC. Methylation increases the termination efficiency of RF1.

The protein resides in the cytoplasm. Its function is as follows. Peptide chain release factor 1 directs the termination of translation in response to the peptide chain termination codons UAG and UAA. This is Peptide chain release factor 1 from Limosilactobacillus fermentum (strain NBRC 3956 / LMG 18251) (Lactobacillus fermentum).